We begin with the raw amino-acid sequence, 200 residues long: Gamma-glutamyl-CDP-amidate hydrolase (200 aa).

Residues 20–200 form the Glutamine amidotransferase type-1 domain; sequence ECLALDWGKL…LKEWFSLIKE (181 aa). Catalysis depends on C101, which acts as the Nucleophile. Catalysis depends on residues H178 and E180.

It catalyses the reaction N(5)-(cytidine 5'-diphosphoramidyl)-L-glutamine + H2O = cytidine 5'-diphosphoramidate + L-glutamate + H(+). Its pathway is capsule biogenesis; capsule polysaccharide biosynthesis. Functionally, involved in the biosynthesis of the O-methyl phosphoramidate (MeOPN) group found on the capsular polysaccharide (CPS) of C.jejuni. Catalyzes the hydrolysis of CDP-L-glutamine to L-glutamate and cytidine diphosphoramidate. The polypeptide is Gamma-glutamyl-CDP-amidate hydrolase (Campylobacter jejuni subsp. jejuni serotype O:2 (strain ATCC 700819 / NCTC 11168)).